The chain runs to 317 residues: Protoheme IX farnesyltransferase (317 aa).

9 helical membrane-spanning segments follow: residues 36 to 56, 57 to 77, 108 to 128, 129 to 149, 157 to 177, 184 to 204, 230 to 247, 251 to 273, and 284 to 304; these read VMVL…ATVN, PVIA…SGCL, LAFG…ASNW, LAAG…SMWL, IVIG…AVTG, LVLF…LALV, IVWY…PVWL, GWLY…VQVY, and AAMG…SALL.

Belongs to the UbiA prenyltransferase family. Protoheme IX farnesyltransferase subfamily.

It localises to the cell inner membrane. The catalysed reaction is heme b + (2E,6E)-farnesyl diphosphate + H2O = Fe(II)-heme o + diphosphate. It functions in the pathway porphyrin-containing compound metabolism; heme O biosynthesis; heme O from protoheme: step 1/1. Converts heme B (protoheme IX) to heme O by substitution of the vinyl group on carbon 2 of heme B porphyrin ring with a hydroxyethyl farnesyl side group. This chain is Protoheme IX farnesyltransferase, found in Methylorubrum populi (strain ATCC BAA-705 / NCIMB 13946 / BJ001) (Methylobacterium populi).